The primary structure comprises 483 residues: Proline--tRNA ligase (483 aa).

The protein belongs to the class-II aminoacyl-tRNA synthetase family. ProS type 3 subfamily. As to quaternary structure, homodimer.

It is found in the cytoplasm. The enzyme catalyses tRNA(Pro) + L-proline + ATP = L-prolyl-tRNA(Pro) + AMP + diphosphate. Functionally, catalyzes the attachment of proline to tRNA(Pro) in a two-step reaction: proline is first activated by ATP to form Pro-AMP and then transferred to the acceptor end of tRNA(Pro). This is Proline--tRNA ligase from Natranaerobius thermophilus (strain ATCC BAA-1301 / DSM 18059 / JW/NM-WN-LF).